Consider the following 393-residue polypeptide: CAI-1 autoinducer synthase (393 aa).

At K240 the chain carries N6-(pyridoxal phosphate)lysine.

Belongs to the class-II pyridoxal-phosphate-dependent aminotransferase family. Pyridoxal 5'-phosphate serves as cofactor.

Functionally, required for the synthesis of the quorum-sensing autoinducer CAI-1 ((S)-3-hydroxytridecan-4-one) which probably functions as an intragenus signal. The chain is CAI-1 autoinducer synthase (cqsA) from Vibrio campbellii (strain ATCC BAA-1116).